Reading from the N-terminus, the 255-residue chain is Proliferating cell nuclear antigen 2 (255 aa).

The DNA-binding element occupies 61 to 80; sequence HCDRNVSLGLDLKSLGKVLK.

The protein belongs to the PCNA family. Homotrimer. Interacts with the catalytic subunits of two DNA polymerase complexes: PolD1 in the delta complex and PolE1/DNApol-epsilon255 in the epsilon complex.

It localises to the nucleus. It is found in the chromosome. Its subcellular location is the cytoplasm. Its function is as follows. Likely to be an auxiliary protein of DNA polymerase delta complex and is probably involved in the control of DNA replication and repair by increasing the polymerase's processibility. May function independently of PCNA during DNA repair. This is Proliferating cell nuclear antigen 2 from Drosophila melanogaster (Fruit fly).